The sequence spans 358 residues: S-adenosylmethionine:tRNA ribosyltransferase-isomerase (358 aa).

It belongs to the QueA family. In terms of assembly, monomer.

The protein resides in the cytoplasm. It catalyses the reaction 7-aminomethyl-7-carbaguanosine(34) in tRNA + S-adenosyl-L-methionine = epoxyqueuosine(34) in tRNA + adenine + L-methionine + 2 H(+). It functions in the pathway tRNA modification; tRNA-queuosine biosynthesis. Transfers and isomerizes the ribose moiety from AdoMet to the 7-aminomethyl group of 7-deazaguanine (preQ1-tRNA) to give epoxyqueuosine (oQ-tRNA). The sequence is that of S-adenosylmethionine:tRNA ribosyltransferase-isomerase from Desulfotalea psychrophila (strain LSv54 / DSM 12343).